The chain runs to 241 residues: Small ribosomal subunit protein uS2 (241 aa).

This sequence belongs to the universal ribosomal protein uS2 family.

In Buchnera aphidicola subsp. Cinara cedri (strain Cc), this protein is Small ribosomal subunit protein uS2.